The sequence spans 156 residues: MQANRSQDDLVKTFKAILKEERFGSQSEIVLALQAEGYGNINQSKVSRMLSKFGAVRTRNAKQEMVYCLPAELGVPTAGSPLKNLVLDVDHNQSMIVVRTSPGAAQLIARLLDSIGKPEGILGTIAGDDTIFITPSNIHEIDKTLDTVKSLFNFND.

It belongs to the ArgR family.

The protein localises to the cytoplasm. The protein operates within amino-acid biosynthesis; L-arginine biosynthesis [regulation]. In terms of biological role, regulates arginine biosynthesis genes. This chain is Arginine repressor, found in Shewanella sediminis (strain HAW-EB3).